The primary structure comprises 493 residues: tRNA (uracil-5-)-methyltransferase homolog B (493 aa).

A mitochondrion-targeting transit peptide spans 1 to 14; sequence MHNPRLFLSRAGFF. Positions 312, 362, and 412 each coordinate S-adenosyl-L-methionine. Catalysis depends on cysteine 440, which acts as the Nucleophile. The Proton acceptor role is filled by glutamate 486.

Belongs to the class I-like SAM-binding methyltransferase superfamily. RNA M5U methyltransferase family.

The protein resides in the mitochondrion matrix. The enzyme catalyses uridine(54) in tRNA + S-adenosyl-L-methionine = 5-methyluridine(54) in tRNA + S-adenosyl-L-homocysteine + H(+). The catalysed reaction is a uridine in 12S rRNA + S-adenosyl-L-methionine = a 5-methyluridine in 12S rRNA + S-adenosyl-L-homocysteine + H(+). Functionally, mitochondrial S-adenosyl-L-methionine-dependent methyltransferase that catalyzes the formation of 5-methyl-uridine in tRNAs and 12S rRNA. Catalyzes the methylation of uridine at position 54 (m5U54) in all tRNAs. Specifically methylates the uridine in position 425 of 12S rRNA (m5U425). Does not affect RNA stability or mitochondrial translation. The sequence is that of tRNA (uracil-5-)-methyltransferase homolog B from Mus musculus (Mouse).